The primary structure comprises 227 residues: Cytochrome c oxidase subunit 2 (227 aa).

Residues 1–14 lie on the Mitochondrial intermembrane side of the membrane; sequence MAYPFQLGLQDATS. Residues 15–45 traverse the membrane as a helical segment; sequence PIMEELLHFHDHTLMIVFLISSLVLYIISLM. The Mitochondrial matrix segment spans residues 46–59; that stretch reads LTTKLTHTSTMDAQ. The helical transmembrane segment at 60 to 87 threads the bilayer; sequence EVETVWTILPAIILILIALPSLRILYMM. At 88–227 the chain is on the mitochondrial intermembrane side; the sequence is DEINNPSLTV…YFETWSAVMV (140 aa). Cu cation-binding residues include histidine 161, cysteine 196, glutamate 198, cysteine 200, histidine 204, and methionine 207. Glutamate 198 contributes to the Mg(2+) binding site. The residue at position 218 (tyrosine 218) is a Phosphotyrosine.

Belongs to the cytochrome c oxidase subunit 2 family. As to quaternary structure, component of the cytochrome c oxidase (complex IV, CIV), a multisubunit enzyme composed of 14 subunits. The complex is composed of a catalytic core of 3 subunits MT-CO1, MT-CO2 and MT-CO3, encoded in the mitochondrial DNA, and 11 supernumerary subunits COX4I, COX5A, COX5B, COX6A, COX6B, COX6C, COX7A, COX7B, COX7C, COX8 and NDUFA4, which are encoded in the nuclear genome. The complex exists as a monomer or a dimer and forms supercomplexes (SCs) in the inner mitochondrial membrane with NADH-ubiquinone oxidoreductase (complex I, CI) and ubiquinol-cytochrome c oxidoreductase (cytochrome b-c1 complex, complex III, CIII), resulting in different assemblies (supercomplex SCI(1)III(2)IV(1) and megacomplex MCI(2)III(2)IV(2)). Found in a complex with TMEM177, COA6, COX18, COX20, SCO1 and SCO2. Interacts with TMEM177 in a COX20-dependent manner. Interacts with COX20. Interacts with COX16. Cu cation is required as a cofactor.

The protein resides in the mitochondrion inner membrane. The enzyme catalyses 4 Fe(II)-[cytochrome c] + O2 + 8 H(+)(in) = 4 Fe(III)-[cytochrome c] + 2 H2O + 4 H(+)(out). Component of the cytochrome c oxidase, the last enzyme in the mitochondrial electron transport chain which drives oxidative phosphorylation. The respiratory chain contains 3 multisubunit complexes succinate dehydrogenase (complex II, CII), ubiquinol-cytochrome c oxidoreductase (cytochrome b-c1 complex, complex III, CIII) and cytochrome c oxidase (complex IV, CIV), that cooperate to transfer electrons derived from NADH and succinate to molecular oxygen, creating an electrochemical gradient over the inner membrane that drives transmembrane transport and the ATP synthase. Cytochrome c oxidase is the component of the respiratory chain that catalyzes the reduction of oxygen to water. Electrons originating from reduced cytochrome c in the intermembrane space (IMS) are transferred via the dinuclear copper A center (CU(A)) of subunit 2 and heme A of subunit 1 to the active site in subunit 1, a binuclear center (BNC) formed by heme A3 and copper B (CU(B)). The BNC reduces molecular oxygen to 2 water molecules using 4 electrons from cytochrome c in the IMS and 4 protons from the mitochondrial matrix. This is Cytochrome c oxidase subunit 2 (MT-CO2) from Lycalopex culpaeus (Culpeo fox).